Reading from the N-terminus, the 91-residue chain is Small ribosomal subunit protein bS18 (91 aa).

The protein belongs to the bacterial ribosomal protein bS18 family. As to quaternary structure, part of the 30S ribosomal subunit. Forms a tight heterodimer with protein bS6.

In terms of biological role, binds as a heterodimer with protein bS6 to the central domain of the 16S rRNA, where it helps stabilize the platform of the 30S subunit. The chain is Small ribosomal subunit protein bS18 from Wolbachia pipientis wMel.